The primary structure comprises 983 residues: Protein CLASP-3 (983 aa).

2 disordered regions span residues 356-393 (YPNRPGSRTRTSSITSTDSRDTSPTRRNSPLPPETQKA) and 666-690 (SNNIATNSGATASRETSNTSFQKES). The span at 359–372 (RPGSRTRTSSITST) shows a compositional bias: low complexity. An HEAT repeat occupies 918 to 956 (ITPTIIKAYQSTSSTVRKTVVYCLVAMVNRVGEQRMTPH).

It belongs to the CLASP family.

It localises to the cytoplasm. The protein localises to the cytoskeleton. Its function is as follows. Microtubule plus-end tracking protein that promotes the stabilization of dynamic microtubules. In Caenorhabditis elegans, this protein is Protein CLASP-3 (cls-3).